The following is a 343-amino-acid chain: Dimethyladenosine transferase 1, mitochondrial (343 aa).

Residues 28-31 (QNFL), N29, L31, G56, E78, D133, and N169 each bind S-adenosyl-L-methionine.

The protein belongs to the class I-like SAM-binding methyltransferase superfamily. rRNA adenine N(6)-methyltransferase family. KsgA subfamily.

Its subcellular location is the mitochondrion. Functionally, probable S-adenosyl-L-methionine-dependent methyltransferase which specifically dimethylates mitochondrial 12S rRNA at the conserved stem loop. Also required for basal transcription of mitochondrial DNA. Stimulates transcription independently of the methyltransferase activity. The chain is Dimethyladenosine transferase 1, mitochondrial from Vermamoeba vermiformis (Amoeba).